The chain runs to 97 residues: Small integral membrane protein 8 (97 aa).

A disordered region spans residues 1–24; that stretch reads MSSAPEPPTFKKEPPKEKDFQSPG. Positions 9-20 are enriched in basic and acidic residues; sequence TFKKEPPKEKDF. Residues 48–67 form a helical membrane-spanning segment; it reads PVMAFGLVTLSLCVAYIGYL.

This sequence belongs to the SMIM8 family.

Its subcellular location is the membrane. The polypeptide is Small integral membrane protein 8 (SMIM8) (Pongo abelii (Sumatran orangutan)).